The chain runs to 197 residues: Thymidine kinase (197 aa).

Residues 9 to 16 and 87 to 90 each bind ATP; these read SAMDAGKT and DEIH. Catalysis depends on glutamate 88, which acts as the Proton acceptor. Positions 145, 147, 187, and 190 each coordinate Zn(2+).

This sequence belongs to the thymidine kinase family. Homotetramer.

Its subcellular location is the cytoplasm. It carries out the reaction thymidine + ATP = dTMP + ADP + H(+). This is Thymidine kinase from Francisella tularensis subsp. tularensis (strain SCHU S4 / Schu 4).